The sequence spans 183 residues: Phosphopantetheine adenylyltransferase (183 aa).

Thr-13 is a substrate binding site. Residues Thr-13–Phe-14 and His-21 contribute to the ATP site. Substrate is bound by residues Lys-45, Leu-81, and Arg-95. ATP contacts are provided by residues Gly-96–Arg-98, Glu-106, and His-131–Arg-137.

This sequence belongs to the bacterial CoaD family. Homohexamer. Requires Mg(2+) as cofactor.

The protein localises to the cytoplasm. It catalyses the reaction (R)-4'-phosphopantetheine + ATP + H(+) = 3'-dephospho-CoA + diphosphate. It participates in cofactor biosynthesis; coenzyme A biosynthesis; CoA from (R)-pantothenate: step 4/5. In terms of biological role, reversibly transfers an adenylyl group from ATP to 4'-phosphopantetheine, yielding dephospho-CoA (dPCoA) and pyrophosphate. This chain is Phosphopantetheine adenylyltransferase, found in Rhodospirillum centenum (strain ATCC 51521 / SW).